The sequence spans 204 residues: Urease accessory protein UreG (204 aa).

Gly15–Thr22 contacts GTP.

It belongs to the SIMIBI class G3E GTPase family. UreG subfamily. Homodimer. UreD, UreF and UreG form a complex that acts as a GTP-hydrolysis-dependent molecular chaperone, activating the urease apoprotein by helping to assemble the nickel containing metallocenter of UreC. The UreE protein probably delivers the nickel.

Its subcellular location is the cytoplasm. Functionally, facilitates the functional incorporation of the urease nickel metallocenter. This process requires GTP hydrolysis, probably effectuated by UreG. This Methylobacterium nodulans (strain LMG 21967 / CNCM I-2342 / ORS 2060) protein is Urease accessory protein UreG.